We begin with the raw amino-acid sequence, 126 residues long: Large ribosomal subunit protein bL12 (126 aa).

It belongs to the bacterial ribosomal protein bL12 family. Homodimer. Part of the ribosomal stalk of the 50S ribosomal subunit. Forms a multimeric L10(L12)X complex, where L10 forms an elongated spine to which 2 to 4 L12 dimers bind in a sequential fashion. Binds GTP-bound translation factors.

Forms part of the ribosomal stalk which helps the ribosome interact with GTP-bound translation factors. Is thus essential for accurate translation. The sequence is that of Large ribosomal subunit protein bL12 from Bifidobacterium longum (strain DJO10A).